Here is a 446-residue protein sequence, read N- to C-terminus: 5-hydroxytryptamine receptor 7 (446 aa).

Topologically, residues Met-1–Val-84 are extracellular. N-linked (GlcNAc...) asparagine glycans are attached at residues Asn-5 and Asn-67. A helical membrane pass occupies residues Ile-85–Phe-109. The Cytoplasmic portion of the chain corresponds to Val-110–Tyr-119. A helical transmembrane segment spans residues Leu-120–Val-141. The Extracellular portion of the chain corresponds to Thr-142–His-153. The chain crosses the membrane as a helical span at residues Phe-154–Ile-179. The cysteines at positions 156 and 232 are disulfide-linked. Asp-163 is a binding site for serotonin. Topologically, residues Asp-180–Cys-199 are cytoplasmic. A helical transmembrane segment spans residues Met-200–Phe-220. At Gly-221–Phe-238 the chain is on the extracellular side. A helical membrane pass occupies residues Gly-239–Tyr-261. At Arg-262 to Ala-327 the chain is on the cytoplasmic side. The chain crosses the membrane as a helical span at residues Thr-328–Phe-353. Over Ile-354–Leu-364 the chain is Extracellular. A helical membrane pass occupies residues Trp-365–Phe-388. Residues Asn-389–Ser-446 are Cytoplasmic-facing. Cys-402 is lipidated: S-palmitoyl cysteine.

This sequence belongs to the G-protein coupled receptor 1 family.

The protein localises to the cell membrane. G-protein coupled receptor for 5-hydroxytryptamine (serotonin), a biogenic hormone that functions as a neurotransmitter, a hormone and a mitogen. Ligand binding causes a conformation change that triggers signaling via guanine nucleotide-binding proteins (G proteins) and modulates the activity of downstream effectors. HTR7 is coupled to G(s) G alpha proteins and mediates activation of adenylate cyclase activity. The protein is 5-hydroxytryptamine receptor 7 (HTR7) of Cavia porcellus (Guinea pig).